A 238-amino-acid polypeptide reads, in one-letter code: Ribonuclease PH (238 aa).

Residues R86 and 124–126 (GTR) contribute to the phosphate site.

Belongs to the RNase PH family. Homohexameric ring arranged as a trimer of dimers.

It carries out the reaction tRNA(n+1) + phosphate = tRNA(n) + a ribonucleoside 5'-diphosphate. In terms of biological role, phosphorolytic 3'-5' exoribonuclease that plays an important role in tRNA 3'-end maturation. Removes nucleotide residues following the 3'-CCA terminus of tRNAs; can also add nucleotides to the ends of RNA molecules by using nucleoside diphosphates as substrates, but this may not be physiologically important. Probably plays a role in initiation of 16S rRNA degradation (leading to ribosome degradation) during starvation. This is Ribonuclease PH from Escherichia coli O6:K15:H31 (strain 536 / UPEC).